Consider the following 160-residue polypeptide: uncharacterized protein (160 aa).

The chain crosses the membrane as a helical span at residues Met1–Thr21.

The protein belongs to the IIV-6 203L/325L family.

It localises to the membrane. This is an uncharacterized protein from Invertebrate iridescent virus 6 (IIV-6).